We begin with the raw amino-acid sequence, 122 residues long: Holo-[acyl-carrier-protein] synthase (122 aa).

2 residues coordinate Mg(2+): Asp-8 and Glu-60.

The protein belongs to the P-Pant transferase superfamily. AcpS family. The cofactor is Mg(2+).

The protein resides in the cytoplasm. It catalyses the reaction apo-[ACP] + CoA = holo-[ACP] + adenosine 3',5'-bisphosphate + H(+). In terms of biological role, transfers the 4'-phosphopantetheine moiety from coenzyme A to a Ser of acyl-carrier-protein. This is Holo-[acyl-carrier-protein] synthase from Anaplasma phagocytophilum (strain HZ).